The sequence spans 715 residues: Protein DOA1 (715 aa).

7 WD repeats span residues 11–40, 53–82, 97–125, 135–166, 177–206, 218–247, and 259–288; these read GHDQ…RLWS, GQGF…NGVP, GHQG…KVWK, AHNA…KLWQ, IHND…KLVD, GHES…RIWS, and LPAI…RIFS. Ser332 is modified (phosphoserine). The PFU domain occupies 352–449; the sequence is AHQFSNSSWK…NGISLDQPND (98 aa). Residues 434–440 form an interaction with HSE1 region; sequence FILKNTN. Residues 465–715 form the PUL domain; the sequence is KVLPVKQYLI…RFKDIFDDLS (251 aa). ARM repeat units lie at residues 478 to 512, 513 to 543, 544 to 582, 583 to 635, 636 to 680, and 681 to 715; these read YNPD…LHDI, DESW…VRLI, VKKL…CFNN, ENWG…LVTK, GNSD…LATV, and EPTL…DDLS.

This sequence belongs to the WD repeat PLAP family. As to quaternary structure, forms a complex composed of CDC48, NPL4, UFD1, DOA1, SHP1 and deubiquitinase OTU1; within the complex interacts with CDC48. Interacts (via PUL domain) with CDC48 (via C-terminus); the interaction is direct. Forms a complex composed of CDC48, DOA1, deubiquitinase UBP3 and probably BRE5; within the complex interacts with CDC48 and UBP3. May form a complex composed of VPS27, HSE1 and DOA1. Interacts with HSE1 (via SH3 domain). Interacts (via WD repeats and PFU domain) with ubiquitin; the interaction is direct. Interacts with ubiquitinated FZO1 but not unmodified FZO1; the interaction recruits FZO1 to CDC48 and promotes FZO1 proteasomal degradation.

Its subcellular location is the nucleus. It localises to the cytoplasm. It is found in the mitochondrion outer membrane. The protein localises to the endosome membrane. Functionally, ubiquitin-binding protein involved in protein ubiquitination, sorting and degradation. Acts as a ubiquitinated substrate-recruiting adapter for chaperone ATPase CDC48 by binding mono- or polyubiquitin chains. Depending on the context, promotes or prevents proteasomal degradation of ubiquitinated proteins. Involved in the ubiquitin fusion degradation (UFD) pathway by promoting the degradation of ubiquitinated proteins. Involved in the mitochondria-associated degradation pathway (MAD) by promoting the degradation of several ubiquitinated membrane proteins. By competing with UFD2 to bind CDC48, prevents the multi-ubiquitination and subsequent degradation of UFD2-dependent substrates. Required for ribophagy, a process which relocalizes ribosomal particles into the vacuole for degradation in response to starvation. Involved in the ubiquitin-mediated sorting of membrane proteins into multivesicular bodies (MVBs). In addition, plays an essential role in maintaining cellular ubiquitin levels. May affect indirectly the degradation of ubiquitinylated proteins by regulating cellular ubiquitin levels. The polypeptide is Protein DOA1 (Saccharomyces cerevisiae (strain ATCC 204508 / S288c) (Baker's yeast)).